The sequence spans 129 residues: Transcription antitermination protein NusB (129 aa).

This sequence belongs to the NusB family.

Involved in transcription antitermination. Required for transcription of ribosomal RNA (rRNA) genes. Binds specifically to the boxA antiterminator sequence of the ribosomal RNA (rrn) operons. The polypeptide is Transcription antitermination protein NusB (Staphylococcus aureus (strain N315)).